A 1479-amino-acid polypeptide reads, in one-letter code: Peroxidasin homolog (1479 aa).

Positions 1–26 (MAKRSRGPGRRCLLALVLFCAWGTLA) are cleaved as a signal peptide. Residues 27-63 (VVAQKPGAGCPSRCLCFRTTVRCMHLLLEAVPAVAPQ) enclose the LRRNT domain. Disulfide bonds link Cys36–Cys42 and Cys40–Cys49. LRR repeat units follow at residues 61-84 (APQTSILDLRFNRIREIQPGAFRR), 85-108 (LRNLNTLLLNNNQIKRIPSGAFED), 110-132 (ENLKYLYLYKNEIQSIDRQAFKG), 133-156 (LASLEQLYLHFNQIETLDPDSFQH), 157-180 (LPKLERLFLHNNRITHLVPGTFNH), and 182-204 (ESMKRLRLDSNTLHCDCEILWLA). The LRRCT domain maps to 192-244 (NTLHCDCEILWLADLLKTYAESGNAQAAAICEYPRRIQGRSVATITPEELNCE). 6 cysteine pairs are disulfide-bonded: Cys196/Cys243, Cys198/Cys222, Cys267/Cys317, Cys363/Cys412, Cys454/Cys502, and Cys546/Cys594. Ig-like C2-type domains lie at 246 to 332 (PRIT…QEVT), 342 to 428 (PTFV…AFII), 433 to 520 (PQFT…LTVQ), and 521 to 610 (PRVT…MVLS). 4 N-linked (GlcNAc...) asparagine glycosylation sites follow: Asn640, Asn699, Asn719, and Asn731. 4 disulfide bridges follow: Cys723–Cys885, Cys732–Cys748, Cys847–Cys857, and Cys851–Cys875. Asp826 is a binding site for heme b. The active-site Proton acceptor is the His827. Asp828 is a Ca(2+) binding site. Asn865 is a glycosylation site (N-linked (GlcNAc...) asparagine). Positions 907, 909, 911, and 913 each coordinate Ca(2+). Cysteines 959 and 970 form a disulfide. Asn964 carries N-linked (GlcNAc...) asparagine glycosylation. The heme b site is built by Glu980 and His1074. An LRR 7 repeat occupies 1151–1175 (ALDLAAINIQRGRDHGIPPYHDYRV). Tyr1176 bears the Phosphotyrosine mark. Disulfide bonds link Cys1177–Cys1234 and Cys1275–Cys1301. Asn1178 carries N-linked (GlcNAc...) asparagine glycosylation. A Phosphoserine modification is found at Ser1180. One copy of the LRR 8 repeat lies at 1270-1291 (LARILCDNADNITRVQSDVFRV). Residues Asn1280, Asn1368, and Asn1425 are each glycosylated (N-linked (GlcNAc...) asparagine). Residues 1315–1411 (CCEDCRTRGQ…QIKKLESRLS (97 aa)) are required in homotrimerization. Positions 1342-1380 (YQEDKPTKKTRPRKIPSVGRQGEHLSNSTSAFSTRSDAS) are disordered. The segment covering 1365 to 1380 (HLSNSTSAFSTRSDAS) has biased composition (polar residues). Residues 1413–1471 (TECVDAGGESHANNTKWKKDACTICECKDGQVTCFVEACPPATCAVPVNIPGACCPVCL) enclose the VWFC domain.

It belongs to the peroxidase family. XPO subfamily. As to quaternary structure, homotrimer; disulfide-linked. The homotrimer form is predominant. Homooligomer; disulfide-linked. Oligomerization occurs intracellularly before C-terminal proteolytic cleavage. Interacts with PXDNL; this interaction inhibits the peroxidase activity of PXDN. Ca(2+) is required as a cofactor. Requires heme b as cofactor. Glycosylated. Four sites are completely N-glycosylated (Asn-640, Asn-731, Asn-865 and Asn-1425), whereas the others are found partially glycosylated. Post-translationally, processed by FURIN and the proteolytic processing largely depends on the peroxidase activity of PXDN. The proteolytic cleavage occurs after intracellular homotrimerization and releases into the extracellular matrix a large, catalytically active fragment and a smaller fragment consisting primarily of the C-terminal VWFC domain. The processing enhances both peroxidase activity and sulfilimine cross-links formation. Expressed at higher levels in heart, lung, ovary, spleen, intestine and placenta, and at lower levels in liver, colon, pancreas, kidney, thymus, skeletal muscle and prostate. Expressed in tumors such as melanoma, breast cancer, ovarian cancer and glioblastoma. A shorter form probably lacking the signal sequence is found in testis and in EB1 cells undergoing p53/TP53-dependent apoptosis.

It localises to the secreted. The protein resides in the extracellular space. It is found in the extracellular matrix. Its subcellular location is the endoplasmic reticulum. The protein localises to the cell surface. It localises to the basement membrane. It carries out the reaction L-lysyl-[collagen] + L-methionyl-[collagen] + H2O2 = [collagen]-L-lysyl-N-S-L-methionyl-[collagen] + 2 H2O + H(+). The catalysed reaction is bromide + H2O2 = hypobromite + H2O. It catalyses the reaction L-lysyl-[collagen] + L-methionyl-[collagen] + hypobromite = [collagen]-L-lysyl-N-S-L-methionyl-[collagen] + bromide + H2O + H(+). The enzyme catalyses L-tyrosyl-[protein] + bromide + H2O2 + H(+) = 3-bromo-L-tyrosyl-[protein] + 2 H2O. It carries out the reaction hypobromite + L-tyrosyl-[protein] + H(+) = 3-bromo-L-tyrosyl-[protein] + H2O. The hypobromous acid formation is activated by increasing nitrite concentrations and inhibited by increasing urate concentrations. Its function is as follows. Catalyzes the two-electron oxidation of bromide by hydrogen peroxide and generates hypobromite as a reactive intermediate which mediates the formation of sulfilimine cross-links between methionine and hydroxylysine residues within an uncross-linked collagen IV/COL4A1 NC1 hexamer. In turns, directly contributes to the collagen IV network-dependent fibronectin/FN and laminin assembly, which is required for full extracellular matrix (ECM)-mediated signaling. Thus, sulfilimine cross-links are essential for growth factor-induced cell proliferation and survival in endothelial cells, an event essential to basement membrane integrity. In addition, through the bromide oxidation, may promote tubulogenesis and induce angiogenesis through ERK1/2, Akt, and FAK pathways. Moreover brominates alpha2 collagen IV chain/COL4A2 at 'Tyr-1485' and leads to bromine enrichment of the basement membranes. In vitro, can also catalyze the two-electron oxidation of thiocyanate and iodide and these two substrates could effectively compete with bromide and thus inhibit the formation of sulfilimine bonds. Binds laminins. May play a role in the organization of eyeball structure and lens development during eye development. In Homo sapiens (Human), this protein is Peroxidasin homolog.